The chain runs to 181 residues: UPF0177 protein YbdI (181 aa).

A run of 5 helical transmembrane segments spans residues isoleucine 10 to alanine 30, leucine 41 to leucine 61, phenylalanine 81 to isoleucine 101, phenylalanine 114 to threonine 134, and serine 161 to isoleucine 181.

This sequence belongs to the UPF0177 family.

It localises to the cell membrane. The polypeptide is UPF0177 protein YbdI (ybdI) (Lactococcus lactis subsp. lactis (strain IL1403) (Streptococcus lactis)).